Consider the following 263-residue polypeptide: R-spondin-1 (263 aa).

The signal sequence occupies residues M1 to S20. FU repeat units follow at residues A34–D85 and M91–A135. 11 disulfide bridges follow: C40–C47, C44–C53, C56–C75, C79–C94, C97–C105, C102–C111, C114–C125, C129–C142, C148–C190, C159–C166, and C199–C206. N137 is a glycosylation site (N-linked (GlcNAc...) asparagine). Residues Q147–P207 form the TSP type-1 domain. Residues W153 and W156 are each glycosylated (C-linked (Man) tryptophan). A disordered region spans residues C206 to A263. The span at G218–E234 shows a compositional bias: basic and acidic residues.

It belongs to the R-spondin family. Interacts with the extracellular domain of FZD8 and LRP6. It however does not form a ternary complex with FZD8 and LRP6. Interacts with WNT1. Binds heparin. Interacts with ZNRF3; promoting indirect interaction between ZNRF3 and LGR4 and membrane clearance of ZNRF3. Interacts with LGR4, LGR5 and LGR6. Identified in a complex composed of RNF43, LGR5 and RSPO1. Interacts (via FU repeats) with KREM1. In terms of processing, C-, and N-glycosylated. N-glycosylation at Asn-137, negatively influences its secretion and enhancing effect on Wnt/beta-catenin signaling. C-mannosylation at Trp-156 by DPY19L3 is required for its secretion and regulates the enhancing activity of Wnt signaling. As to expression, abundantly expressed in adrenal glands, ovary, testis, thyroid and trachea but not in bone marrow, spinal cord, stomach, leukocytes colon, small intestine, prostate, thymus and spleen.

It localises to the secreted. It is found in the nucleus. In terms of biological role, activator of the canonical Wnt signaling pathway by acting as a ligand for LGR4-6 receptors. Upon binding to LGR4-6 (LGR4, LGR5 or LGR6), LGR4-6 associate with phosphorylated LRP6 and frizzled receptors that are activated by extracellular Wnt receptors, triggering the canonical Wnt signaling pathway to increase expression of target genes. Also regulates the canonical Wnt/beta-catenin-dependent pathway and non-canonical Wnt signaling by acting as an inhibitor of ZNRF3, an important regulator of the Wnt signaling pathway. Acts as a ligand for frizzled FZD8 and LRP6. May negatively regulate the TGF-beta pathway. Has a essential roles in ovary determination. Regulates Wnt signaling by antagonizing DKK1/KREM1-mediated internalization of LRP6 through an interaction with KREM1. In Homo sapiens (Human), this protein is R-spondin-1 (RSPO1).